Here is a 471-residue protein sequence, read N- to C-terminus: Serine/threonine-protein kinase sid1 (471 aa).

Residues 9–260 (YTLLRKLGSG…AKELLQHPFI (252 aa)) form the Protein kinase domain. Residues 15–23 (LGSGSFGVV) and K38 each bind ATP. D129 serves as the catalytic Proton acceptor.

This sequence belongs to the protein kinase superfamily. STE Ser/Thr protein kinase family. STE20 subfamily. As to quaternary structure, interacts with cdc14.

The protein localises to the cytoplasm. The protein resides in the cytoskeleton. It localises to the microtubule organizing center. Its subcellular location is the spindle pole body. It catalyses the reaction L-seryl-[protein] + ATP = O-phospho-L-seryl-[protein] + ADP + H(+). The catalysed reaction is L-threonyl-[protein] + ATP = O-phospho-L-threonyl-[protein] + ADP + H(+). Has a role in the septation initiation network (SIN) required for cytokinesis. The protein is Serine/threonine-protein kinase sid1 (sid1) of Schizosaccharomyces pombe (strain 972 / ATCC 24843) (Fission yeast).